Reading from the N-terminus, the 166-residue chain is Transcription factor HES-5 (166 aa).

Positions 16–72 (KNRLRKPVVEKMRRDRINSSIEQLKLLLEQEFARHQPNSKLEKADILEMAVSYLKHS) constitute a bHLH domain. Positions 88–119 (YSEGYSWCLQEAVQFLTLHAASDTQMKLLYHF) constitute an Orange domain. The interval 125–166 (PAAPVKETPTPGAAPQPARSSTKAAASVSTSRQSACGLWRPW) is disordered. Residues 142–156 (ARSSTKAAASVSTSR) show a composition bias toward low complexity. Positions 163 to 166 (WRPW) match the WRPW motif motif.

In terms of assembly, transcription repression requires formation of a complex with a corepressor protein of the Groucho/TLE family. In terms of tissue distribution, expressed predominantly in embryonic neural lineage cells.

It is found in the nucleus. Transcriptional repressor of genes that require a bHLH protein for their transcription. Plays an important role as neurogenesis negative regulator. This Rattus norvegicus (Rat) protein is Transcription factor HES-5 (Hes5).